The chain runs to 734 residues: Threonine--tRNA ligase, cytoplasmic (734 aa).

The disordered stretch occupies residues 1-41 (MSASEAGVTEQVKKLSVKDSSNDAVKPNKKENKKSKQQSLY). The segment covering 11-30 (QVKKLSVKDSSNDAVKPNKK) has biased composition (basic and acidic residues). In terms of domain architecture, TGS spans 69-135 (SMPRVPLKIV…EGEANEEIKL (67 aa)). A phosphoserine mark is found at serine 195 and serine 289. Residues threonine 297 and threonine 381 each carry the phosphothreonine modification. Residues serine 453 and serine 457 each carry the phosphoserine modification. The residue at position 460 (threonine 460) is a Phosphothreonine. Serine 605 bears the Phosphoserine mark.

Belongs to the class-II aminoacyl-tRNA synthetase family.

The protein localises to the cytoplasm. It carries out the reaction tRNA(Thr) + L-threonine + ATP = L-threonyl-tRNA(Thr) + AMP + diphosphate + H(+). In Saccharomyces cerevisiae (strain ATCC 204508 / S288c) (Baker's yeast), this protein is Threonine--tRNA ligase, cytoplasmic (THS1).